Consider the following 555-residue polypeptide: ATP-dependent RNA helicase MRH4, mitochondrial (555 aa).

The transit peptide at 1–25 (MFKLLIPNKYNYVIRPLVRFKSIKS) directs the protein to the mitochondrion. The Q motif signature appears at 101–108 (DIKPTPVQ). One can recognise a Helicase ATP-binding domain in the interval 144–361 (ANEIQKTKVF…SKLFPDQRSL (218 aa)). 157-164 (AETGSGKT) serves as a coordination point for ATP. A DEAD box motif is present at residues 309–312 (DEAD). The Helicase C-terminal domain maps to 395-555 (CLAQALYAIS…NAIIRGLRIG (161 aa)).

The protein belongs to the DEAD box helicase family. MRH4 subfamily.

Its subcellular location is the mitochondrion. The catalysed reaction is ATP + H2O = ADP + phosphate + H(+). Its function is as follows. ATP-binding RNA helicase involved in mitochondrial RNA metabolism. Required for maintenance of mitochondrial DNA. This Candida albicans (strain SC5314 / ATCC MYA-2876) (Yeast) protein is ATP-dependent RNA helicase MRH4, mitochondrial (MRH4).